The following is a 238-amino-acid chain: 2-C-methyl-D-erythritol 4-phosphate cytidylyltransferase (238 aa).

Belongs to the IspD/TarI cytidylyltransferase family. IspD subfamily.

The enzyme catalyses 2-C-methyl-D-erythritol 4-phosphate + CTP + H(+) = 4-CDP-2-C-methyl-D-erythritol + diphosphate. It participates in isoprenoid biosynthesis; isopentenyl diphosphate biosynthesis via DXP pathway; isopentenyl diphosphate from 1-deoxy-D-xylulose 5-phosphate: step 2/6. Functionally, catalyzes the formation of 4-diphosphocytidyl-2-C-methyl-D-erythritol from CTP and 2-C-methyl-D-erythritol 4-phosphate (MEP). The chain is 2-C-methyl-D-erythritol 4-phosphate cytidylyltransferase from Salinibacter ruber (strain DSM 13855 / M31).